The primary structure comprises 387 residues: EP300-interacting inhibitor of differentiation 3 (387 aa).

Positions 1 to 19 (MSEEKCSLTGGEEKGEELA) are enriched in basic and acidic residues. The segment at 1–77 (MSEEKCSLTG…SDDLSPEAPC (77 aa)) is disordered. A compositionally biased stretch (acidic residues) spans 32–72 (EEDDDDDEEALKKEEEEEEEEEEEDEEEEEEGPDSSSDDLS).

Belongs to the NSE4 family. Component of the SMC5-SMC6 complex which consists at least of SMC5, SMC6, NSMCE2, NSMCE1, NSMCE4A or EID3 and NSMCE3. NSMCE1, NSMCE4A or EID3 and NSMCE3 probably form a subcomplex that bridges the head domains of the SMC5:SMC6 heterodimer. Homodimer, and heterodimer with EID2. Interacts with the C-terminal region of CREBBP.

The protein resides in the nucleus. The protein localises to the cytoplasm. It is found in the chromosome. Its subcellular location is the telomere. Functionally, tissue-specific component of the SMC5-SMC6 complex, a complex involved in repair of DNA double-strand breaks by homologous recombination. The complex may promote sister chromatid homologous recombination by recruiting the SMC1-SMC3 cohesin complex to double-strand breaks. The complex is required for telomere maintenance via recombination and mediates sumoylation of shelterin complex (telosome) components. Its function is as follows. Acts as a repressor of nuclear receptor-dependent transcription possibly by interfering with CREBBP-dependent coactivation. May function as a coinhibitor of other CREBBP/EP300-dependent transcription factors. The polypeptide is EP300-interacting inhibitor of differentiation 3 (Rattus norvegicus (Rat)).